A 332-amino-acid chain; its full sequence is Gibberellin 2-beta-dioxygenase (332 aa).

The 106-residue stretch at 175–280 folds into the Fe2OG dioxygenase domain; it reads KSDSCFRLNH…RLSMIYFGGP (106 aa). The Fe cation site is built by histidine 204, aspartate 206, and histidine 261. Residue arginine 271 is part of the active site.

Belongs to the iron/ascorbate-dependent oxidoreductase family. GA2OX subfamily. It depends on Fe cation as a cofactor.

The catalysed reaction is gibberellin A1 + 2-oxoglutarate + O2 = gibberellin A8 + succinate + CO2. The protein operates within plant hormone biosynthesis; gibberellin biosynthesis. In terms of biological role, catalyzes the 2-beta-hydroxylation of several biologically active gibberellins, leading to the homeostatic regulation of their endogenous level. Catabolism of gibberellins (GAs) plays a central role in plant development. Converts GA9/GA20 to GA51/GA29 and GA4/GA1 to GA34/GA8. The sequence is that of Gibberellin 2-beta-dioxygenase (GA2OX1) from Phaseolus coccineus (Scarlet runner bean).